The primary structure comprises 209 residues: Uracil phosphoribosyltransferase (209 aa).

Residues Arg-79, Arg-104, and 131–139 (DPMLATGGS) contribute to the 5-phospho-alpha-D-ribose 1-diphosphate site. Uracil-binding positions include Ile-194 and 199-201 (GDA). Asp-200 lines the 5-phospho-alpha-D-ribose 1-diphosphate pocket.

Belongs to the UPRTase family. It depends on Mg(2+) as a cofactor.

It catalyses the reaction UMP + diphosphate = 5-phospho-alpha-D-ribose 1-diphosphate + uracil. It participates in pyrimidine metabolism; UMP biosynthesis via salvage pathway; UMP from uracil: step 1/1. With respect to regulation, allosterically activated by GTP. In terms of biological role, catalyzes the conversion of uracil and 5-phospho-alpha-D-ribose 1-diphosphate (PRPP) to UMP and diphosphate. This Enterococcus faecalis (strain ATCC 700802 / V583) protein is Uracil phosphoribosyltransferase.